A 316-amino-acid chain; its full sequence is Acetaldehyde dehydrogenase 3 (316 aa).

12–15 (SGNI) contacts NAD(+). Residue Cys132 is the Acyl-thioester intermediate of the active site. NAD(+) contacts are provided by residues 163–171 (SAGPGTRAN) and Asn289.

Belongs to the acetaldehyde dehydrogenase family.

The catalysed reaction is acetaldehyde + NAD(+) + CoA = acetyl-CoA + NADH + H(+). The chain is Acetaldehyde dehydrogenase 3 (mhpF) from Comamonas testosteroni (Pseudomonas testosteroni).